Here is a 214-residue protein sequence, read N- to C-terminus: UPF0502 protein Spro_2794 (214 aa).

Belongs to the UPF0502 family.

The sequence is that of UPF0502 protein Spro_2794 from Serratia proteamaculans (strain 568).